The primary structure comprises 174 residues: CASP-like protein 4D2 (174 aa).

Residues 1–14 lie on the Cytoplasmic side of the membrane; sequence MAPPPPSPPPVSLK. Residues 15–35 form a helical membrane-spanning segment; the sequence is VSLLLLRVLTGVFLVIALIIL. Residues 36–60 are Extracellular-facing; it reads STNSVTIVSQGSALKFHFKDVYAYR. A helical membrane pass occupies residues 61–81; the sequence is YMLSAAVIGLLYAVIQLFFTI. Topologically, residues 82–150 are cytoplasmic; the sequence is SEFATGMKNP…FFSRGYASAS (69 aa). The chain crosses the membrane as a helical span at residues 151 to 171; sequence LLLFSFICLAVLSVFSSLAIA. Over 172 to 174 the chain is Extracellular; that stretch reads KRN.

This sequence belongs to the Casparian strip membrane proteins (CASP) family. In terms of assembly, homodimer and heterodimers.

The protein resides in the cell membrane. The protein is CASP-like protein 4D2 of Arabidopsis lyrata subsp. lyrata (Lyre-leaved rock-cress).